Here is a 111-residue protein sequence, read N- to C-terminus: BET1-like protein (111 aa).

Topologically, residues 1–86 are cytoplasmic; the sequence is MADWTRAQSS…MARSGRDNRK (86 aa). 2 positions are modified to phosphoserine: serine 9 and serine 37. The t-SNARE coiled-coil homology domain maps to 15-77; it reads DILDRENKRM…TGSVKRFSTM (63 aa). A helical; Anchor for type IV membrane protein membrane pass occupies residues 87 to 107; it reads LLCGMAVVLIVAFFILSYLLS. Topologically, residues 108–111 are lumenal; the sequence is RTRT.

In terms of assembly, component of a SNARE complex consisting of STX5, YKT6, GOSR1 and BET1L. Interacts with STX5.

It localises to the golgi apparatus membrane. Its subcellular location is the golgi apparatus. It is found in the trans-Golgi network membrane. Its function is as follows. Vesicle SNARE required for targeting and fusion of retrograde transport vesicles with the Golgi complex. Required for the integrity of the Golgi complex. The protein is BET1-like protein of Mus musculus (Mouse).